The following is a 393-amino-acid chain: Formate-dependent phosphoribosylglycinamide formyltransferase (393 aa).

N(1)-(5-phospho-beta-D-ribosyl)glycinamide is bound by residues 22-23 (EL) and Glu82. ATP is bound by residues Arg114, Lys155, 160–165 (SSGKGQ), 195–198 (EGFI), and Glu203. The ATP-grasp domain maps to 119 to 308 (RLAAEELGLP…EFALHARAIL (190 aa)). Glu267 and Glu279 together coordinate Mg(2+). N(1)-(5-phospho-beta-D-ribosyl)glycinamide is bound by residues Asp286, Lys356, and 363–364 (RR).

Belongs to the PurK/PurT family. As to quaternary structure, homodimer.

It carries out the reaction N(1)-(5-phospho-beta-D-ribosyl)glycinamide + formate + ATP = N(2)-formyl-N(1)-(5-phospho-beta-D-ribosyl)glycinamide + ADP + phosphate + H(+). It participates in purine metabolism; IMP biosynthesis via de novo pathway; N(2)-formyl-N(1)-(5-phospho-D-ribosyl)glycinamide from N(1)-(5-phospho-D-ribosyl)glycinamide (formate route): step 1/1. Involved in the de novo purine biosynthesis. Catalyzes the transfer of formate to 5-phospho-ribosyl-glycinamide (GAR), producing 5-phospho-ribosyl-N-formylglycinamide (FGAR). Formate is provided by PurU via hydrolysis of 10-formyl-tetrahydrofolate. The protein is Formate-dependent phosphoribosylglycinamide formyltransferase of Azotobacter vinelandii (strain DJ / ATCC BAA-1303).